The following is a 194-amino-acid chain: Transposon Tn2501 resolvase (194 aa).

One can recognise a Resolvase/invertase-type recombinase catalytic domain in the interval 3 to 143 (RVFAYCRVST…SGIARAKATG (141 aa)). Ser-11 acts as the O-(5'-phospho-DNA)-serine intermediate in catalysis. A DNA-binding region (H-T-H motif) is located at residues 170 to 189 (ISAIAREFNTTRQTILRVKA).

Belongs to the site-specific recombinase resolvase family.

In terms of biological role, resolvase catalyzes the resolution (a site-specific recombination) of the cointegrated replicon to yield the final transposition products. This Escherichia coli protein is Transposon Tn2501 resolvase (tnpR).